Consider the following 115-residue polypeptide: Putative type I restriction enzyme MpnIIP endonuclease subunit middle part (115 aa).

In terms of biological role, the middle section of a putative type I restriction enzyme that if reconstituted might recognize 5'-GAN(7)TAY-3' and cleave a random distance away. Subunit R is required for both nuclease and ATPase activities, but not for modification. The sequence is that of Putative type I restriction enzyme MpnIIP endonuclease subunit middle part from Mycoplasma pneumoniae (strain ATCC 29342 / M129 / Subtype 1) (Mycoplasmoides pneumoniae).